An 878-amino-acid polypeptide reads, in one-letter code: Aconitate hydratase A (878 aa).

Residues C426, C492, and C495 each contribute to the [4Fe-4S] cluster site.

This sequence belongs to the aconitase/IPM isomerase family. Monomer. It depends on [4Fe-4S] cluster as a cofactor.

The enzyme catalyses citrate = D-threo-isocitrate. It catalyses the reaction (2S,3R)-3-hydroxybutane-1,2,3-tricarboxylate = 2-methyl-cis-aconitate + H2O. It participates in carbohydrate metabolism; tricarboxylic acid cycle; isocitrate from oxaloacetate: step 2/2. It functions in the pathway organic acid metabolism; propanoate degradation. In terms of biological role, involved in the catabolism of short chain fatty acids (SCFA) via the tricarboxylic acid (TCA)(acetyl degradation route) and probably the 2-methylcitrate cycle I (propionate degradation route). Catalyzes the reversible isomerization of citrate to isocitrate via cis-aconitate. Could catalyze the hydration of 2-methyl-cis-aconitate to yield (2R,3S)-2-methylisocitrate. The apo form of AcnA functions as a RNA-binding regulatory protein. This chain is Aconitate hydratase A (acnA), found in Rickettsia conorii (strain ATCC VR-613 / Malish 7).